We begin with the raw amino-acid sequence, 171 residues long: 3-hydroxyanthranilate 3,4-dioxygenase (171 aa).

Residue R45 participates in O2 binding. Residues H49, E55, and H93 each coordinate Fe cation. Substrate is bound at residue E55. Substrate is bound by residues R97 and E107. A divalent metal cation-binding residues include C122, C125, C159, and C162.

This sequence belongs to the 3-HAO family. Fe(2+) is required as a cofactor.

The protein resides in the cytoplasm. It carries out the reaction 3-hydroxyanthranilate + O2 = (2Z,4Z)-2-amino-3-carboxymuconate 6-semialdehyde. The protein operates within cofactor biosynthesis; NAD(+) biosynthesis; quinolinate from L-kynurenine: step 3/3. Functionally, catalyzes the oxidative ring opening of 3-hydroxyanthranilate to 2-amino-3-carboxymuconate semialdehyde, which spontaneously cyclizes to quinolinate. The chain is 3-hydroxyanthranilate 3,4-dioxygenase from Candida albicans (strain SC5314 / ATCC MYA-2876) (Yeast).